The primary structure comprises 190 residues: NADH dehydrogenase [ubiquinone] iron-sulfur protein 3 (190 aa).

Belongs to the complex I 30 kDa subunit family. In terms of assembly, complex I is composed of about 45 different subunits. This is a component of the iron-sulfur (IP) fragment of the enzyme.

The protein localises to the mitochondrion inner membrane. The catalysed reaction is a ubiquinone + NADH + 5 H(+)(in) = a ubiquinol + NAD(+) + 4 H(+)(out). Its function is as follows. Core subunit of the mitochondrial membrane respiratory chain NADH dehydrogenase (Complex I) that is believed to belong to the minimal assembly required for catalysis. Complex I functions in the transfer of electrons from NADH to the respiratory chain. The immediate electron acceptor for the enzyme is believed to be ubiquinone. The chain is NADH dehydrogenase [ubiquinone] iron-sulfur protein 3 (NAD9) from Oryza sativa subsp. japonica (Rice).